The sequence spans 201 residues: Lipopolysaccharide core heptose(II)-phosphate phosphatase (201 aa).

A signal peptide spans 1-35 (MLAFTLRFIKNKRYFAILAGALVIIAGLTSQHAWS).

Belongs to the phosphoglycerate mutase family. Ais subfamily.

It is found in the periplasm. It participates in bacterial outer membrane biogenesis; lipopolysaccharide metabolism. In terms of biological role, catalyzes the dephosphorylation of heptose(II) of the outer membrane lipopolysaccharide core. This chain is Lipopolysaccharide core heptose(II)-phosphate phosphatase, found in Salmonella enteritidis PT4 (strain P125109).